The following is a 125-amino-acid chain: Fluoride-specific ion channel FluC (125 aa).

4 consecutive transmembrane segments (helical) span residues 4–24 (IALVATGGAIGSVFRYLVGVW), 35–55 (WGTLAVNIVGSFLIGLLVELV), 68–88 (FLVTGVLGGFTTFSSFSLDAV), and 100–120 (AFYILASLVVSIAAVFAGLAL). 2 residues coordinate Na(+): Gly75 and Thr78.

The protein belongs to the fluoride channel Fluc/FEX (TC 1.A.43) family.

The protein resides in the cell inner membrane. It catalyses the reaction fluoride(in) = fluoride(out). Na(+) is not transported, but it plays an essential structural role and its presence is essential for fluoride channel function. Functionally, fluoride-specific ion channel. Important for reducing fluoride concentration in the cell, thus reducing its toxicity. The protein is Fluoride-specific ion channel FluC of Agrobacterium fabrum (strain C58 / ATCC 33970) (Agrobacterium tumefaciens (strain C58)).